Here is a 1305-residue protein sequence, read N- to C-terminus: Junctional cadherin 5-associated protein (1305 aa).

Disordered regions lie at residues 13–86 (YKLS…PSTA), 120–151 (REQE…VGGR), 249–419 (GVPK…HTTA), 450–545 (KLDG…CEMQ), 575–604 (IPVK…EQSV), 616–795 (ALTG…SRQL), and 818–1005 (FNKE…GLSA). 4 stretches are compositionally biased toward basic and acidic residues: residues 21–31 (APHEDDGERRQ), 69–82 (PESR…HGER), 120–129 (REQEAREDPG), and 140–151 (HPREGPWEVGGR). The segment covering 337 to 358 (GLEPPVYVPPPSYKSPPQPAAH) has biased composition (pro residues). Basic and acidic residues predominate over residues 360–369 (CPEEAVSRHE). Composition is skewed to polar residues over residues 530-545 (LVSS…CEMQ) and 579-594 (SESQ…NDLK). Positions 595–604 (QSASLQEQSV) are enriched in low complexity. The segment covering 669–683 (QQTQTSFAHEPQSLQ) has biased composition (polar residues). Residues 729-748 (SPKSQGSLSPSSNSAFSGSS) show a composition bias toward low complexity. The residue at position 841 (S841) is a Phosphoserine. Basic and acidic residues-rich tracts occupy residues 878-889 (SKSESWSEEGRP) and 945-958 (AKPE…EQRE). Phosphoserine is present on residues S1004, S1010, S1152, and S1239. 2 disordered regions span residues 1062-1166 (GAQR…DVET) and 1234-1305 (SRAA…VERV). Positions 1276 to 1288 (ADGHPAARRENGG) are enriched in basic and acidic residues.

The protein localises to the cell junction. It localises to the adherens junction. The chain is Junctional cadherin 5-associated protein (JCAD) from Bos taurus (Bovine).